The chain runs to 363 residues: Guanine nucleotide-binding protein alpha-11 subunit (363 aa).

A G-alpha domain is found at 26–363 (KMLKILLLGG…KISMEKVGFM (338 aa)). The tract at residues 29 to 42 (KILLLGGPECGKST) is G1 motif. Residues 34–41 (GGPECGKS), 172–178 (LRARVPT), 197–201 (DVGGQ), 276–279 (NKID), and A335 contribute to the GTP site. Residues S41 and T178 each coordinate Mg(2+). Positions 170–178 (DVLRARVPT) are G2 motif. Positions 193–202 (LRMVDVGGQR) are G3 motif. The G4 motif stretch occupies residues 272–279 (ILFLNKID). A G5 motif region spans residues 333–338 (TNATDT).

This sequence belongs to the G-alpha family. As to quaternary structure, g proteins are composed of 3 units; alpha, beta and gamma. The alpha chain contains the guanine nucleotide binding site. In terms of tissue distribution, expressed in ADL and ASH neurons.

Guanine nucleotide-binding proteins (G proteins) are involved as modulators or transducers in various transmembrane signaling systems. Mediates the transduction of food and serotonin signals, which modulates the avoidance response to the odorant octanol. Has a role in lifespan to promote longevity. The sequence is that of Guanine nucleotide-binding protein alpha-11 subunit (gpa-11) from Caenorhabditis elegans.